Here is a 1315-residue protein sequence, read N- to C-terminus: Chaoptin (1315 aa).

Residues 1-29 (MGLEFFFKFGYAFLTITLMIMIWMSLARA) form the signal peptide. A glycan (N-linked (GlcNAc...) (high mannose) asparagine; alternate) is linked at N77. A glycan (N-linked (GlcNAc...) (paucimannose) asparagine; alternate) is linked at N77. 9 LRR repeats span residues 80-101 (KVFM…FLQS), 103-124 (GMYR…AFTG), 128-149 (SLWE…SLRH), 152-173 (KLRH…SFRG), 177-198 (SLQT…SFSG), 201-222 (ILET…VFVD), 226-247 (RLTR…ALGP), 250-271 (SLRT…ETYE), and 279-300 (NLDN…SFKY). N-linked (GlcNAc...) (paucimannose) asparagine; alternate glycosylation is present at N267. N-linked (GlcNAc...) (complex) asparagine; alternate glycosylation is present at N267. N305 is a glycosylation site (N-linked (GlcNAc...) (high mannose) asparagine; alternate). N305 carries N-linked (GlcNAc...) (paucimannose) asparagine; alternate glycosylation. 27 LRR repeats span residues 326–347 (RIRE…AFDS), 351–372 (SLQI…LFNN), 375–396 (VLRV…ETFN), 401–424 (TLLK…RNMT), 477–498 (GLKR…AFHE), 527–548 (SLQE…SFHF), 551–572 (NLRL…TFQG), 577–598 (KLEE…TFFD), 601–622 (ALRK…AFMN), 625–646 (ELEY…SFQN), 649–670 (KLEI…YFDQ), 676–696 (NLNV…SSWS), 708–729 (NIKI…YFRP), 733–754 (SLTH…VFGN), 757–778 (HLQW…AFKN), 781–802 (QLQL…IFKP), 805–826 (GLRI…LFYN), 828–849 (GMEK…SLSS), 854–875 (TLCE…DLSN), 879–900 (SLRY…VFAT), 903–924 (KLAV…SFMG), 928–948 (SLIK…IRLK), 949–970 (YLRE…LAHN), 973–994 (NLRM…TQAL), 996–1017 (HLRR…SFDG), 1021–1044 (DLEM…DSLP), and 1045–1066 (HLRS…PHLL). N-linked (GlcNAc...) (high mannose) asparagine glycosylation occurs at N361. A glycan (N-linked (GlcNAc...) asparagine) is linked at N422. N-linked (GlcNAc...) (high mannose) asparagine glycosylation occurs at N680. An N-linked (GlcNAc...) (high mannose) asparagine; alternate glycan is attached at N692. A glycan (N-linked (GlcNAc...) (paucimannose) asparagine; alternate) is linked at N692. An N-linked (GlcNAc...) (high mannose) asparagine glycan is attached at N718. The N-linked (GlcNAc...) asparagine glycan is linked to N746. N-linked (GlcNAc...) (high mannose) asparagine glycosylation is present at N936. N-linked (GlcNAc...) (paucimannose) asparagine glycosylation is present at N970. N1012 is a glycosylation site (N-linked (GlcNAc...) (complex) asparagine). N-linked (GlcNAc...) (high mannose) asparagine glycans are attached at residues N1122, N1152, and N1171. One can recognise an LRRCT domain in the interval 1211–1274 (TDLNCDCDLG…DDLRETRCEN (64 aa)).

Belongs to the chaoptin family. Expressed in photoreceptor cells and their axons in the adult retina, the ocellus and larval photoreceptor organ.

It is found in the cell membrane. In terms of biological role, required for photoreceptor cell morphogenesis. Mediates homophilic cellular adhesion. This Drosophila melanogaster (Fruit fly) protein is Chaoptin (chp).